The following is a 56-amino-acid chain: Small ribosomal subunit protein uS14 (56 aa).

Cysteine 21, cysteine 24, cysteine 39, and cysteine 42 together coordinate Zn(2+).

The protein belongs to the universal ribosomal protein uS14 family. Zn(2+) serves as cofactor.

The protein is Small ribosomal subunit protein uS14 (RPS29) of Candida glabrata (strain ATCC 2001 / BCRC 20586 / JCM 3761 / NBRC 0622 / NRRL Y-65 / CBS 138) (Yeast).